Reading from the N-terminus, the 398-residue chain is Growth-regulating factor 3 (398 aa).

Residues 1–17 (MDLQLKQWRSQQQQQHQ) are compositionally biased toward low complexity. Positions 1–32 (MDLQLKQWRSQQQQQHQTESEEQPSAAKIPKH) are disordered. The QLQ domain maps to 76–111 (FFSWAQWQELELQALIYRYMLAGAAVPQELLLPIKK). The WRC domain maps to 144-188 (DPEPGRCRRTDGKKWRCSRDVFAGHKYCERHMHRGRNRSRKPVET). 2 consecutive short sequence motifs (bipartite nuclear localization signal) follow at residues 149–159 (RCRRTDGKKWR) and 177–184 (RGRNRSRK). Polar residues-rich tracts occupy residues 299–350 (SLQE…RDQQ) and 383–398 (PTSVLHQLGVSTQAFH). The disordered stretch occupies residues 299-398 (SLQEADNSSS…QLGVSTQAFH (100 aa)).

The protein belongs to the GRF family. Strongly expressed in actively growing and developing tissues, such as roots, upper stems, and shoot tips containing the shoot apical meristem (SAM) and flower buds. Also expressed in mature flowers, but weakly expressed in mature stems and leaves.

It localises to the nucleus. Functionally, transcription activator that plays a role in the regulation of cell expansion in leaf and cotyledons tissues. Component of a network formed by miR396, the GRFs and their interacting factors (GIFs) acting in the regulation of meristem function, at least partially through the control of cell proliferation. microRNA396-GRF1/GRF3 regulatory module acts as a developmental regulator in the reprogramming of root cells during cyst nematode infection, leading to the formation of the syncytium. The polypeptide is Growth-regulating factor 3 (GRF3) (Arabidopsis thaliana (Mouse-ear cress)).